The primary structure comprises 137 residues: Universal stress protein HP_0031 (137 aa).

It belongs to the universal stress protein A family.

The chain is Universal stress protein HP_0031 from Helicobacter pylori (strain ATCC 700392 / 26695) (Campylobacter pylori).